Consider the following 303-residue polypeptide: MADAASQVLLGSGLTILSQPLMYVKVLIQVGYEPLPPTIGRNIFGRQVCQLPGLFSYAQHIASIDGRRGLFTGLTPRLCSGVLGTVVHGKVLQHYQESDKGEELGPGNVQKEVSSSFDHVIKETTREMIARSAATLITHPFHVITLRSMVQFIGRESKYCGLCDSIITIYREEGILGFFAGLVPRLLGDILSLWLCNSLAYLVNTYALDSGVSTMNEMKSYSQAVTGFFASMLTYPFVLVSNLMAVNNCGLAGGCPPYSPIYTSWIDCWCMLQKEGNMSRGNSLFFRKVPFGKTYCCDLKMLI.

Ala2 bears the N-acetylalanine mark. Residues 2–15 (ADAASQVLLGSGLT) lie on the Mitochondrial intermembrane side of the membrane. Solcar repeat units lie at residues 2-98 (ADAA…YQES) and 118-206 (DHVI…VNTY). A helical membrane pass occupies residues 16–36 (ILSQPLMYVKVLIQVGYEPLP). Residues 37–77 (PTIGRNIFGRQVCQLPGLFSYAQHIASIDGRRGLFTGLTPR) lie on the Cytoplasmic side of the membrane. The helical transmembrane segment at 78–92 (LCSGVLGTVVHGKVL) threads the bilayer. The Mitochondrial intermembrane segment spans residues 93–135 (QHYQESDKGEELGPGNVQKEVSSSFDHVIKETTREMIARSAAT). Residues 136–156 (LITHPFHVITLRSMVQFIGRE) form a helical membrane-spanning segment. At 157–180 (SKYCGLCDSIITIYREEGILGFFA) the chain is on the cytoplasmic side. The chain crosses the membrane as a helical span at residues 181–199 (GLVPRLLGDILSLWLCNSL). Residues 200–231 (AYLVNTYALDSGVSTMNEMKSYSQAVTGFFAS) lie on the Mitochondrial intermembrane side of the membrane. A helical transmembrane segment spans residues 232–252 (MLTYPFVLVSNLMAVNNCGLA). The Cytoplasmic segment spans residues 253–280 (GGCPPYSPIYTSWIDCWCMLQKEGNMSR). The helical transmembrane segment at 281 to 303 (GNSLFFRKVPFGKTYCCDLKMLI) threads the bilayer.

This sequence belongs to the mitochondrial carrier (TC 2.A.29) family. As to quaternary structure, interacts with p15BID.

The protein localises to the mitochondrion outer membrane. In terms of biological role, protein insertase that mediates insertion of transmembrane proteins into the mitochondrial outer membrane. Catalyzes insertion of proteins with alpha-helical transmembrane regions, such as signal-anchored, tail-anchored and multi-pass membrane proteins. Does not mediate insertion of beta-barrel transmembrane proteins. Also acts as a receptor for the truncated form of pro-apoptotic BH3-interacting domain death agonist (p15 BID) and has therefore a critical function in apoptosis. Regulates the quiescence/cycling of hematopoietic stem cells (HSCs). Acts as a regulator of mitochondrial fusion, essential for the naive-to-primed interconversion of embryonic stem cells (ESCs). Acts as a regulator of lipid homeostasis and has a regulatory role in adipocyte differentiation and biology. The polypeptide is Mitochondrial carrier homolog 2 (Homo sapiens (Human)).